The following is a 144-amino-acid chain: Prefoldin subunit alpha (144 aa).

The protein belongs to the prefoldin subunit alpha family. As to quaternary structure, heterohexamer of two alpha and four beta subunits.

It localises to the cytoplasm. Functionally, molecular chaperone capable of stabilizing a range of proteins. Seems to fulfill an ATP-independent, HSP70-like function in archaeal de novo protein folding. The sequence is that of Prefoldin subunit alpha from Methanococcus maripaludis (strain DSM 14266 / JCM 13030 / NBRC 101832 / S2 / LL).